A 250-amino-acid chain; its full sequence is 2,3-bisphosphoglycerate-dependent phosphoglycerate mutase (250 aa).

Substrate contacts are provided by residues 10–17 (RHGESQWN), 23–24 (TG), arginine 62, 89–92 (ERHY), lysine 100, 116–117 (RR), and 185–186 (GN). Histidine 11 serves as the catalytic Tele-phosphohistidine intermediate. The active-site Proton donor/acceptor is the glutamate 89.

The protein belongs to the phosphoglycerate mutase family. BPG-dependent PGAM subfamily. As to quaternary structure, homodimer.

The enzyme catalyses (2R)-2-phosphoglycerate = (2R)-3-phosphoglycerate. The protein operates within carbohydrate degradation; glycolysis; pyruvate from D-glyceraldehyde 3-phosphate: step 3/5. Its function is as follows. Catalyzes the interconversion of 2-phosphoglycerate and 3-phosphoglycerate. The protein is 2,3-bisphosphoglycerate-dependent phosphoglycerate mutase of Cronobacter sakazakii (strain ATCC BAA-894) (Enterobacter sakazakii).